A 71-amino-acid chain; its full sequence is Cytotoxic linear peptide IsCT2 (71 aa).

Residues 1-23 form the signal peptide; it reads MKTQFAILLVALVLFQMFAQSEA. Phe-36 carries the phenylalanine amide modification. A propeptide spanning residues 40–71 is cleaved from the precursor; the sequence is ALNNDLDLDGLDELFDGEISQADVDFLKELMR.

The protein belongs to the non-disulfide-bridged peptide (NDBP) superfamily. Short antimicrobial peptide (group 4) family. Post-translationally, isCT2F is an enzymatic proteolytic cleavage product of IsCT2 by the proteases present in the venom. Expressed by the venom gland.

It localises to the secreted. It is found in the target cell membrane. Its function is as follows. IsCT2 shows weak hemolytic activity and antibacterial activity against both Gram-positive and Gram-negative bacteria probably by forming pores in the cell membrane. IsCT2 adopts an amphipathic alpha-helical structure. In terms of biological role, isCT2f shows neither hemolytic, nor antibacterial activities, surely due to the fact that it cannot apply amphipathic alpha-helical structure. The polypeptide is Cytotoxic linear peptide IsCT2 (Opisthacanthus madagascariensis (Scorpion)).